Consider the following 125-residue polypeptide: Small ribosomal subunit protein uS12 (125 aa).

A disordered region spans residues 1–26 (MPTINQLVRKSRKTVKAQSDSPALKN). Asp-89 carries the post-translational modification 3-methylthioaspartic acid.

The protein belongs to the universal ribosomal protein uS12 family. In terms of assembly, part of the 30S ribosomal subunit. Contacts proteins S8 and S17. May interact with IF1 in the 30S initiation complex.

In terms of biological role, with S4 and S5 plays an important role in translational accuracy. Interacts with and stabilizes bases of the 16S rRNA that are involved in tRNA selection in the A site and with the mRNA backbone. Located at the interface of the 30S and 50S subunits, it traverses the body of the 30S subunit contacting proteins on the other side and probably holding the rRNA structure together. The combined cluster of proteins S8, S12 and S17 appears to hold together the shoulder and platform of the 30S subunit. The protein is Small ribosomal subunit protein uS12 of Clostridium tetani (strain Massachusetts / E88).